The following is a 216-amino-acid chain: FMN-dependent NADH:quinone oxidoreductase (216 aa).

Residues 15-17 (SVS) and 139-142 (SRGG) each bind FMN.

Belongs to the azoreductase type 1 family. As to quaternary structure, homodimer. The cofactor is FMN.

The catalysed reaction is 2 a quinone + NADH + H(+) = 2 a 1,4-benzosemiquinone + NAD(+). It catalyses the reaction N,N-dimethyl-1,4-phenylenediamine + anthranilate + 2 NAD(+) = 2-(4-dimethylaminophenyl)diazenylbenzoate + 2 NADH + 2 H(+). Functionally, quinone reductase that provides resistance to thiol-specific stress caused by electrophilic quinones. Its function is as follows. Also exhibits azoreductase activity. Catalyzes the reductive cleavage of the azo bond in aromatic azo compounds to the corresponding amines. In Acidovorax ebreus (strain TPSY) (Diaphorobacter sp. (strain TPSY)), this protein is FMN-dependent NADH:quinone oxidoreductase.